We begin with the raw amino-acid sequence, 375 residues long: Queuine tRNA-ribosyltransferase (375 aa).

D90 (proton acceptor) is an active-site residue. Substrate is bound by residues 90-94 (DSGGF), D144, Q193, and G220. Positions 251–257 (GVGTPED) are RNA binding. The active-site Nucleophile is the D270. Residues 275-279 (TRNAR) form an RNA binding; important for wobble base 34 recognition region. C308, C310, C313, and H339 together coordinate Zn(2+).

It belongs to the queuine tRNA-ribosyltransferase family. In terms of assembly, homodimer. Within each dimer, one monomer is responsible for RNA recognition and catalysis, while the other monomer binds to the replacement base PreQ1. It depends on Zn(2+) as a cofactor.

The catalysed reaction is 7-aminomethyl-7-carbaguanine + guanosine(34) in tRNA = 7-aminomethyl-7-carbaguanosine(34) in tRNA + guanine. The protein operates within tRNA modification; tRNA-queuosine biosynthesis. In terms of biological role, catalyzes the base-exchange of a guanine (G) residue with the queuine precursor 7-aminomethyl-7-deazaguanine (PreQ1) at position 34 (anticodon wobble position) in tRNAs with GU(N) anticodons (tRNA-Asp, -Asn, -His and -Tyr). Catalysis occurs through a double-displacement mechanism. The nucleophile active site attacks the C1' of nucleotide 34 to detach the guanine base from the RNA, forming a covalent enzyme-RNA intermediate. The proton acceptor active site deprotonates the incoming PreQ1, allowing a nucleophilic attack on the C1' of the ribose to form the product. After dissociation, two additional enzymatic reactions on the tRNA convert PreQ1 to queuine (Q), resulting in the hypermodified nucleoside queuosine (7-(((4,5-cis-dihydroxy-2-cyclopenten-1-yl)amino)methyl)-7-deazaguanosine). This chain is Queuine tRNA-ribosyltransferase, found in Methylibium petroleiphilum (strain ATCC BAA-1232 / LMG 22953 / PM1).